The primary structure comprises 417 residues: uncharacterized protein (417 aa).

Transmembrane regions (helical) follow at residues 1–21, 32–52, 96–116, 168–188, 192–212, 261–281, 286–306, 351–371, and 392–412; these read MSVLSSILGMVVLIAIAVLLS, VVGALAIQVGFAALILYVPAG, VLPIIVFFSGLISVLYYLGIM, LFAIMVGGTASIAGSVMAGYA, VPLTYLIAASFMAAPAGLLFA, IAFVGLIALINGILSGVGGWF, LTLQSIFGLIFKPLAYLIGVT, AIITFALCGFANFSSIAILIG, and VIAGTLANLMSATIAGLFIGL.

It belongs to the concentrative nucleoside transporter (CNT) (TC 2.A.41) family.

It localises to the cell inner membrane. This is an uncharacterized protein from Haemophilus influenzae (strain ATCC 51907 / DSM 11121 / KW20 / Rd).